The primary structure comprises 173 residues: MEEIQQQQQQQQQQQQQQQQQQQQQQELTQEQIMEFKEAFCLFDKDGDGCITADELATVIRSLDQNPTEQELQDMITEIDSDGNGTIEFSEFLNLMANQLQETDADEELKEAFKVFDKDQNGYISASELRHVMINLGEKLTDEEVDQMIKEADLDGDGQVNYDEFVRMMMING.

The segment covering 1-26 (MEEIQQQQQQQQQQQQQQQQQQQQQQ) has biased composition (low complexity). Positions 1-27 (MEEIQQQQQQQQQQQQQQQQQQQQQQE) are disordered. 4 EF-hand domains span residues 31–66 (EQIM…LDQN), 67–102 (PTEQ…QLQE), 104–139 (DADE…LGEK), and 140–173 (LTDE…MING). Residues Asp-44, Asp-46, Asp-48, Cys-50, Glu-55, Asp-80, Asp-82, Asn-84, Thr-86, Glu-91, Asp-117, Asp-119, Asn-121, Tyr-123, Glu-128, Asp-153, Asp-155, Asp-157, Gln-159, and Glu-164 each coordinate Ca(2+).

The protein belongs to the calmodulin family.

Its function is as follows. Potential calcium sensor. This chain is Calmodulin-like protein 11 (CML11), found in Arabidopsis thaliana (Mouse-ear cress).